The chain runs to 454 residues: Glutaredoxin domain-containing cysteine-rich protein CG31559 (454 aa).

2 disordered regions span residues 30–88 (ETAD…QRQK) and 217–239 (RSAR…GSDS). Residues 33-45 (DSGNGSDLESTGL) show a composition bias toward polar residues. Residues 58 to 69 (SSLGSDSMHGSS) are compositionally biased toward low complexity. Over residues 70-84 (TEYVRQSASQPSGQR) the composition is skewed to polar residues. A compositionally biased stretch (basic and acidic residues) spans 217–227 (RSARSGDEADH). In terms of domain architecture, Glutaredoxin spans 295–400 (NAKNFKEKDL…QLLKPYKSMA (106 aa)).

Belongs to the GRXCR1 family.

The chain is Glutaredoxin domain-containing cysteine-rich protein CG31559 from Drosophila melanogaster (Fruit fly).